Here is a 744-residue protein sequence, read N- to C-terminus: MATGVAPAPLPHVRVRDGGIGFTRSVDFAKILSVPATLRVGSSRGRVLVAKSSSTGSDTMELEPSSEGSPLLVPRQKYCESIYETRRRKTRTVMVGNVPLGSDHPIRIQTMTTSDTKDVAKTVEEVMRIADKGADFVRITVQGRKEADACFEIKNTLVQKNYNIPLVADIHFAPTVALRVAECFDKIRVNPGNFADRRAQFEQLEYTEDDYQKELEHIEKVFSPLVEKCKQYGRAMRIGTNHGSLSDRIMSYYGDSPRGMVESALEFARICRKLDFHNFVFSMKASNPVIMVQAYRLLVAEMYNLGWDYPLHLGVTEAGEGEDGRMKSAIGIGTLLMDGLGDTIRVSLTEPPEEEIDPCRRLANLGTHAADLQIGVAPFEEKHRRYFDFQRRSGQLPLQKEGEEVDYRGVLHRDGSVLMSVSLDQLKAPELLYRSLAAKLVVGMPFKDLATVDSILLRELPPVEDAQARLALKRLVDISMGVLTPLSEQLTKPLPHAIALVNVDELSSGAHKLLPEGTRLAVTLRGDESYEQLDLLKGVDDITMLLHSVPYGEEKTGRVHAARRLFEYLETNGLNFPVIHHIEFPKSVNRDDLVIGAGANVGALLVDGLGDGVLLEAADQEFEFLRDTSFNLLQGCRMRNTKTEYVSCPSCGRTLFDLQEVSAQIREKTSHLPGVSIAIMGCIVNGPGEMADADFGYVGGAPGKIDLYVGKTVVQRGIAMEGATDALIQLIKDHGRWVDPPVEE.

Residues M1–R39 constitute a chloroplast transit peptide. [4Fe-4S] cluster-binding residues include C648, C651, C682, and E689.

This sequence belongs to the IspG family. In terms of assembly, homodimer. [4Fe-4S] cluster is required as a cofactor.

The protein resides in the plastid. It is found in the chloroplast stroma. It carries out the reaction (2E)-4-hydroxy-3-methylbut-2-enyl diphosphate + 2 oxidized [2Fe-2S]-[ferredoxin] + H2O = 2-C-methyl-D-erythritol 2,4-cyclic diphosphate + 2 reduced [2Fe-2S]-[ferredoxin] + H(+). It functions in the pathway isoprenoid biosynthesis; isopentenyl diphosphate biosynthesis via DXP pathway; isopentenyl diphosphate from 1-deoxy-D-xylulose 5-phosphate: step 5/6. In terms of biological role, enzyme of the plastid non-mevalonate pathway for isoprenoid biosynthesis that converts 2-C-methyl-D-erythritol 2,4-cyclodiphosphate (ME-2,4cPP) into 1-hydroxy-2-methyl-2-(E)-butenyl 4-diphosphate. Is essential for chloroplast development. This chain is 4-hydroxy-3-methylbut-2-en-1-yl diphosphate synthase (ferredoxin), chloroplastic (ISPG), found in Oryza sativa subsp. japonica (Rice).